Here is a 286-residue protein sequence, read N- to C-terminus: Diaminopimelate epimerase (286 aa).

Substrate-binding residues include Asn-13 and Asn-66. The active-site Proton donor is the Cys-75. Substrate-binding positions include 76–77 (GN), Asn-165, Asn-198, and 216–217 (ER). Cys-225 acts as the Proton acceptor in catalysis. Residue 226-227 (GT) coordinates substrate.

It belongs to the diaminopimelate epimerase family. As to quaternary structure, homodimer.

Its subcellular location is the cytoplasm. The catalysed reaction is (2S,6S)-2,6-diaminopimelate = meso-2,6-diaminopimelate. The protein operates within amino-acid biosynthesis; L-lysine biosynthesis via DAP pathway; DL-2,6-diaminopimelate from LL-2,6-diaminopimelate: step 1/1. Catalyzes the stereoinversion of LL-2,6-diaminopimelate (L,L-DAP) to meso-diaminopimelate (meso-DAP), a precursor of L-lysine and an essential component of the bacterial peptidoglycan. The sequence is that of Diaminopimelate epimerase from Thermosynechococcus vestitus (strain NIES-2133 / IAM M-273 / BP-1).